The primary structure comprises 196 residues: Small ribosomal subunit protein uS4c (196 aa).

The disordered stretch occupies residues 15–43; the sequence is LGALPGLTRKTPKSGSNQKKKFHSGKKEQ. Residues 89–150 enclose the S4 RNA-binding domain; sequence MRLDNILFRL…NQRSKRLVQN (62 aa).

Belongs to the universal ribosomal protein uS4 family. As to quaternary structure, part of the 30S ribosomal subunit. Contacts protein S5. The interaction surface between S4 and S5 is involved in control of translational fidelity.

It is found in the plastid. The protein resides in the chloroplast. Functionally, one of the primary rRNA binding proteins, it binds directly to 16S rRNA where it nucleates assembly of the body of the 30S subunit. Its function is as follows. With S5 and S12 plays an important role in translational accuracy. This Melinis repens (Red Natal grass) protein is Small ribosomal subunit protein uS4c (rps4).